Consider the following 112-residue polypeptide: cAMP-regulated phosphoprotein 19 (112 aa).

Positions 1–11 (MSAESPEPASA) are enriched in low complexity. Residues 1–48 (MSAESPEPASAEEQKEMEDKVISPEKAEEAKLKARYPHLGQKPGGSDF) are disordered. An N-acetylserine modification is found at Ser2. Positions 12-32 (EEQKEMEDKVISPEKAEEAKL) are enriched in basic and acidic residues. Phosphoserine; by GWL occurs at positions 62 and 104. Positions 73–112 (KNKQLPTAAPDKTEVTGDHIPTPQDLPQRKPSLVASKLAG) are disordered. Position 104 is a phosphoserine; by PKA (Ser104).

Belongs to the endosulfine family. Interacts (when phosphorylated at Ser-62) with PPP2R2D. In terms of processing, phosphorylation at Ser-62 by MASTL/GWL during mitosis is essential for interaction with PPP2R2D (PR55-delta) and subsequent inactivation of PP2A.

Its subcellular location is the cytoplasm. Protein phosphatase inhibitor that specifically inhibits protein phosphatase 2A (PP2A) during mitosis. Inhibition of PP2A is enhanced when ARPP19 is phosphorylated. When phosphorylated at Ser-62 during mitosis, specifically interacts with PPP2R2D (PR55-delta) and inhibits its activity, leading to inactivation of PP2A, an essential condition to keep cyclin-B1-CDK1 activity high during M phase. The sequence is that of cAMP-regulated phosphoprotein 19 (ARPP19) from Gallus gallus (Chicken).